Reading from the N-terminus, the 102-residue chain is Scorpine-like-2 (102 aa).

Residues 1–19 form the signal peptide; it reads MQTQCTVLQLLVLVALCSC. The region spanning 63-102 is the BetaSPN-type CS-alpha/beta domain; it reads QQLCLIVDTVQWCNKSCLAAENKEGYCHGTKCKCGIKVSY. 3 cysteine pairs are disulfide-bonded: Cys66-Cys89, Cys75-Cys94, and Cys79-Cys96.

It belongs to the long chain scorpion toxin family. Class 3 subfamily. As to expression, expressed by the venom gland.

The protein resides in the secreted. Its function is as follows. Inhibits voltage-gated potassium channels. This Urodacus yaschenkoi (Inland robust scorpion) protein is Scorpine-like-2.